Here is a 183-residue protein sequence, read N- to C-terminus: MYLKVNIQDYFWSSSSEVKKLKLQEDRDQKCPIFFYRWEYWFQKWLEILQPNIPPAQNYELSLRLTDDSEIQILNNKYRYQNQPTDVLAFANLEVDIPQPEVVDSDLQLYLGDIVISVETAFQQAKQQGHPLITELTWLAAHGFLHLLGWDHLDQESWQKMVKQQLFLLNAVGEVYWITDNSR.

Residues H142, H146, and H152 each contribute to the Zn(2+) site.

The protein belongs to the endoribonuclease YbeY family. Zn(2+) serves as cofactor.

The protein localises to the cytoplasm. Functionally, single strand-specific metallo-endoribonuclease involved in late-stage 70S ribosome quality control and in maturation of the 3' terminus of the 16S rRNA. In Trichodesmium erythraeum (strain IMS101), this protein is Endoribonuclease YbeY.